The following is a 309-amino-acid chain: UDP-N-acetylenolpyruvoylglucosamine reductase (309 aa).

An FAD-binding PCMH-type domain is found at 34–198 (RVGGPAEVMF…VRARLHARPG (165 aa)). Arg-178 is an active-site residue. Residue Ser-227 is the Proton donor of the active site. The active site involves Glu-297.

This sequence belongs to the MurB family. Requires FAD as cofactor.

Its subcellular location is the cytoplasm. It carries out the reaction UDP-N-acetyl-alpha-D-muramate + NADP(+) = UDP-N-acetyl-3-O-(1-carboxyvinyl)-alpha-D-glucosamine + NADPH + H(+). Its pathway is cell wall biogenesis; peptidoglycan biosynthesis. Functionally, cell wall formation. The sequence is that of UDP-N-acetylenolpyruvoylglucosamine reductase from Acidiphilium cryptum (strain JF-5).